Reading from the N-terminus, the 359-residue chain is Outer membrane protein A (359 aa).

The signal sequence occupies residues 1 to 21 (MKKTAIALAVALAGFATVAQA). Beta stranded transmembrane passes span 27-37 (TWYTGAKLGWS), 62-73 (QLGAGAFLGYQA), 77-85 (LGFELGYDW), 103-114 (QGVQLAAKLSYP), 119-127 (LDIYTRLGG), 154-163 (PLAAVGVEYA), 168-175 (WATRLDYQ), and 194-202 (MLSLGVSYR). 5 tandem repeats follow at residues 210-211 (AP), 212-213 (AP), 214-215 (AP), 216-217 (AP), and 218-219 (AP). The segment at 210–219 (APAPAPAPAP) is 5 X 2 AA tandem repeats of A-P. Positions 221 to 351 (VETKRFTLKS…RVEIEVKGIK (131 aa)) constitute an OmpA-like domain. The cysteines at positions 322 and 336 are disulfide-linked.

Belongs to the outer membrane OOP (TC 1.B.6) superfamily. OmpA family. In terms of assembly, monomer and homodimer.

The protein resides in the cell outer membrane. Its function is as follows. With TolR probably plays a role in maintaining the position of the peptidoglycan cell wall in the periplasm. Acts as a porin with low permeability that allows slow penetration of small solutes; an internal gate slows down solute passage. The polypeptide is Outer membrane protein A (Serratia marcescens).